Reading from the N-terminus, the 244-residue chain is Glucosamine-6-phosphate deaminase (244 aa).

D67 (proton acceptor; for enolization step) is an active-site residue. Catalysis depends on N136, which acts as the For ring-opening step. The active-site Proton acceptor; for ring-opening step is H138. E143 serves as the catalytic For ring-opening step.

This sequence belongs to the glucosamine/galactosamine-6-phosphate isomerase family. NagB subfamily.

It catalyses the reaction alpha-D-glucosamine 6-phosphate + H2O = beta-D-fructose 6-phosphate + NH4(+). Its pathway is amino-sugar metabolism; N-acetylneuraminate degradation; D-fructose 6-phosphate from N-acetylneuraminate: step 5/5. Functionally, catalyzes the reversible isomerization-deamination of glucosamine 6-phosphate (GlcN6P) to form fructose 6-phosphate (Fru6P) and ammonium ion. The protein is Glucosamine-6-phosphate deaminase of Clostridium botulinum (strain Okra / Type B1).